A 425-amino-acid polypeptide reads, in one-letter code: MAKQIQAIRGMNDILPTQSPLWQKVEAVLRASVAAYGYSEIRTPIVENTDLFKRSIGEVTDIVEKEMYTFEDRNGDSLTLRPEGTASTVRAGNEHGLLYNQEQRLWYMGPMFRHERPQKGRYRQFHQFGVEVYGIGSADIDAEVLMLSARLWEKLGISEHVTLELNTLGDPAERAAYREALIAFLEQHKDKLDEDSQRRMYSNPLRVLDSKDPQVQSILADAPALMDYLGEESSQHFAQLRELLDAVGIQYRVNPRLVRGLDYYNRTVFEWVTNSLGSQGTVLAGGRYDGLVAQLGGKDTPAVGFAMGLERIVLLLETLELTQDIPAAVDVYVAAMGDSCLVEAIKVAQELRSTLPTLRVMSHCGGGNFKKQIKRADKSGAQVALLIGEEELAEGVVTVKYLRNDNEQQRVARNALSAFLAELTK.

This sequence belongs to the class-II aminoacyl-tRNA synthetase family. In terms of assembly, homodimer.

It localises to the cytoplasm. It catalyses the reaction tRNA(His) + L-histidine + ATP = L-histidyl-tRNA(His) + AMP + diphosphate + H(+). This Shewanella sp. (strain ANA-3) protein is Histidine--tRNA ligase.